Consider the following 64-residue polypeptide: Large ribosomal subunit protein eL37 (64 aa).

Residues 1 to 6 (GRCSAC) form a C4-type zinc finger. Zn(2+)-binding residues include cysteine 3 and cysteine 6.

Belongs to the eukaryotic ribosomal protein eL37 family. Requires Zn(2+) as cofactor.

Its function is as follows. Binds to the 23S rRNA. The polypeptide is Large ribosomal subunit protein eL37 (RPL37) (Solanum lycopersicum (Tomato)).